An 87-amino-acid polypeptide reads, in one-letter code: Kappa-3-bungarotoxin (87 aa).

Residues 1-21 form the signal peptide; sequence MKTLLLSLVVVTIVCLDLGYT. Intrachain disulfides connect Cys-24–Cys-42, Cys-35–Cys-63, Cys-48–Cys-52, Cys-67–Cys-79, and Cys-80–Cys-85.

This sequence belongs to the three-finger toxin family. Long-chain subfamily. Kappa-neurotoxin sub-subfamily. Homodimer and heterodimer with kappa 2-bungarotoxin; non-covalently-linked. As to expression, expressed by the venom gland.

It localises to the secreted. Its function is as follows. Postsynaptic neurotoxin that binds and inhibits neuronal nicotinic acetylcholine receptors (nAChR) with high affinity (IC(50)&lt;100 nM). Is a selective, and slowly reversible antagonist of alpha-3/CHRNA3-containing and some alpha-4/CHRNA4-containing AChRs. The polypeptide is Kappa-3-bungarotoxin (Bungarus multicinctus (Many-banded krait)).